Reading from the N-terminus, the 306-residue chain is Homoserine kinase (306 aa).

ATP is bound at residue 84-94; the sequence is PAGLGLGSSGA.

The protein belongs to the GHMP kinase family. Homoserine kinase subfamily.

Its subcellular location is the cytoplasm. It carries out the reaction L-homoserine + ATP = O-phospho-L-homoserine + ADP + H(+). Its pathway is amino-acid biosynthesis; L-threonine biosynthesis; L-threonine from L-aspartate: step 4/5. In terms of biological role, catalyzes the ATP-dependent phosphorylation of L-homoserine to L-homoserine phosphate. The polypeptide is Homoserine kinase (Sulfurisphaera tokodaii (strain DSM 16993 / JCM 10545 / NBRC 100140 / 7) (Sulfolobus tokodaii)).